Here is a 199-residue protein sequence, read N- to C-terminus: Imidazoleglycerol-phosphate dehydratase (199 aa).

It belongs to the imidazoleglycerol-phosphate dehydratase family.

It is found in the cytoplasm. The enzyme catalyses D-erythro-1-(imidazol-4-yl)glycerol 3-phosphate = 3-(imidazol-4-yl)-2-oxopropyl phosphate + H2O. It functions in the pathway amino-acid biosynthesis; L-histidine biosynthesis; L-histidine from 5-phospho-alpha-D-ribose 1-diphosphate: step 6/9. The polypeptide is Imidazoleglycerol-phosphate dehydratase (Paramagnetospirillum magneticum (strain ATCC 700264 / AMB-1) (Magnetospirillum magneticum)).